We begin with the raw amino-acid sequence, 120 residues long: U13-lycotoxin-Ls1f (120 aa).

Positions 1 to 16 (MKILFVLISILYAVYC) are cleaved as a signal peptide. A propeptide spanning residues 17-54 (FSSEEDVDSAYLANELEPVEDINSEQYAALEPKEEQER) is cleaved from the precursor. 4 disulfide bridges follow: C56–C70, C63–C76, C69–C87, and C78–C85. The region spanning 56–95 (CAGMGQDCKDDCDCCLNIATCNCWFGRYFCSCTFGDYQTC) is the Agouti domain.

This sequence belongs to the neurotoxin 05 (agouti) family. Contains 6 disulfide bonds. In terms of tissue distribution, expressed by the venom gland.

It is found in the secreted. The protein is U13-lycotoxin-Ls1f of Lycosa singoriensis (Wolf spider).